The primary structure comprises 908 residues: Glutamate receptor ionotropic, kainate 2 (908 aa).

Positions 1 to 31 (MQRIAGITKMVTHRRWLGLLLLLLCVGYSHG) are cleaved as a signal peptide. Residues 32–561 (MPHVLRFGGI…VFSFLNPLSP (530 aa)) are Extracellular-facing. N-linked (GlcNAc...) asparagine glycans are attached at residues N67, N73, N275, N378, N412, N423, and N430. C96 and C347 form a disulfide bridge. 3 residues coordinate L-glutamate: P516, A518, and R523. N546 carries an N-linked (GlcNAc...) asparagine glycan. A helical membrane pass occupies residues 562–582 (DIWMYILLAYLGVSCVLFVIA). The Cytoplasmic portion of the chain corresponds to 583–638 (RFSPYEWYNPHPCNPDSDVVENNFTLLNSFWFGVGALMQQGSELMPKALSTRIVGG). A helical membrane pass occupies residues 639–659 (IWWFFTLIIISSYTANLAAFL). The Extracellular portion of the chain corresponds to 660–819 (TVERMESPID…KEASALGVQN (160 aa)). Residues S689, T690, and E738 each coordinate L-glutamate. An intrachain disulfide couples C750 to C804. N-linked (GlcNAc...) asparagine glycosylation is present at N751. A helical transmembrane segment spans residues 820-840 (IGGIFIVLAAGLVLSVFVAVG). Topologically, residues 841-908 (EFLYKSKQNA…RRLPGKETMA (68 aa)) are cytoplasmic.

This sequence belongs to the glutamate-gated ion channel (TC 1.A.10.1) family. GRIK2 subfamily. As to quaternary structure, homotetramer and heterotetramer with GRIK5. Tetramers may be formed by the dimerization of dimers.

The protein resides in the cell membrane. Its subcellular location is the postsynaptic cell membrane. It carries out the reaction Ca(2+)(in) = Ca(2+)(out). It catalyses the reaction Na(+)(in) = Na(+)(out). With respect to regulation, cold receptor activity activated by temperatures between 10-19 degrees Celsius. Ionotropic glutamate receptor that functions as a cation-permeable ligand-gated ion channel, gated by L-glutamate and the glutamatergic agonist kainic acid. L-glutamate acts as an excitatory neurotransmitter at many synapses in the central nervous system. Binding of the excitatory neurotransmitter L-glutamate induces a conformation change, leading to the opening of the cation channel, and thereby converts the chemical signal to an electrical impulse. The receptor then desensitizes rapidly and enters a transient inactive state, characterized by the presence of bound agonist. Functionally, independent of its ionotropic glutamate receptor activity, acts as a thermoreceptor conferring sensitivity to cold temperatures. Functions in dorsal root ganglion neurons. In Danio rerio (Zebrafish), this protein is Glutamate receptor ionotropic, kainate 2.